Here is a 1036-residue protein sequence, read N- to C-terminus: MIMDNSKTTSKTTLLKLMLLRAWKERWTDCQWGINVKTILTRGVSGDVYNLADAIIQQAVVGSGANMLFLSYLKHSLCAHLISHAAVLNRIAKYDQYDKHHCLIALLDFLKSIIDGVTCRGKQEEAILTKATVSLVHWLLQIYECVLQSYAEDSTLQPEEEEVVQRVAVVLERIVENPFLLGVLSIGKCDDPELFIALQKRFNGISNLTLTTGYVANVGAGNANSLTVTDCMRKLVLLEVDALEMRPFDGGKVEPITYSLQPLIAIEVLLNPMCDTHQYVAQLINLKRLKGFTYARLYCELMRGCLIALNNVEGTAKESLLCAFAFIKVPHILHQLHAKTNGAEQQDEATGATYSVEVLEAFELLLQDTPVLDYMDMKCACNVVECLLKEMVKLQLLTDTHVKQLVALREPVTAGLHKLDANSAPLTMMLKFVFRVESPLAGILKALSTDCSKVQDALLAMLCQVLTGNSLDLVLSVASVEGKFKAFISGLLKCNDYAKQATTAEIGKAPTTRSALFDVSFMILASIAQSYGSDVILAEGGNSFFEKWVRDYMVERKKTKSPMTMVKQADPMVLEELIMAMNNSEGMYVGLKASSLRWEDICYTIPALVHQVLMAWESESIAPLEIKKMLDGLKAYFSTFAVCAASWLCAYMQMVRQDEQLKPMNMVQQLCSALAGPLADEWQQQDYCKERFGLMGQIVRRMQQEFLRTPQVNPKLRALFPSQQQQHVVSHLPLEEQFEEAWKAIAERGWLPIETTFLLDTLLQSCGPAWLVEKLIGKLFVCKYVRDLNKTMDIIFAIMHLDIERCTIALLSQLVPMMLLNKAQTPDIVDPQSRVLAKLCVYCIIVTMETSLTATKKRTRGTASSELEDLDALCTSAKLRKIELDGMGVGCTEAATGGASGTEFSLDSALEPTASAWTTEAASIATLKEPLQSCLQTLFRTFAQHIATDELSPKVYFVFQFLSLLVESGRERIMCVLKLLPNGLVQSLLKINATDEMTVGLILRLYDLNTPSGRQFAMSDICLLRNIQMRKESIKL.

Belongs to the Mediator complex subunit 24 family. As to quaternary structure, component of the Mediator complex.

The protein resides in the nucleus. Component of the Mediator complex, a coactivator involved in the regulated transcription of nearly all RNA polymerase II-dependent genes. Mediator functions as a bridge to convey information from gene-specific regulatory proteins to the basal RNA polymerase II transcription machinery. Mediator is recruited to promoters by direct interactions with regulatory proteins and serves as a scaffold for the assembly of a functional preinitiation complex with RNA polymerase II and the general transcription factors. The protein is Mediator of RNA polymerase II transcription subunit 24 (MED24) of Anopheles gambiae (African malaria mosquito).